The sequence spans 78 residues: DNA-directed RNA polymerase subunit omega (78 aa).

Belongs to the RNA polymerase subunit omega family. The RNAP catalytic core consists of 2 alpha, 1 beta, 1 beta' and 1 omega subunit. When a sigma factor is associated with the core the holoenzyme is formed, which can initiate transcription.

It carries out the reaction RNA(n) + a ribonucleoside 5'-triphosphate = RNA(n+1) + diphosphate. Functionally, promotes RNA polymerase assembly. Latches the N- and C-terminal regions of the beta' subunit thereby facilitating its interaction with the beta and alpha subunits. This chain is DNA-directed RNA polymerase subunit omega, found in Desulfovibrio desulfuricans (strain ATCC 27774 / DSM 6949 / MB).